The chain runs to 673 residues: Methionine--tRNA ligase (673 aa).

Positions 13–23 (PYTNGFCHLGH) match the 'HIGH' region motif. Residues cysteine 144, cysteine 147, cysteine 156, and cysteine 160 each contribute to the Zn(2+) site. A 'KMSKS' region motif is present at residues 325 to 329 (KFSKS). Lysine 328 is an ATP binding site. The tRNA-binding domain maps to 575 to 673 (DVAKLDLRVG…KDVPEGTKVH (99 aa)).

The protein belongs to the class-I aminoacyl-tRNA synthetase family. MetG type 1 subfamily. In terms of assembly, homodimer. It depends on Zn(2+) as a cofactor.

The protein localises to the cytoplasm. It carries out the reaction tRNA(Met) + L-methionine + ATP = L-methionyl-tRNA(Met) + AMP + diphosphate. Functionally, is required not only for elongation of protein synthesis but also for the initiation of all mRNA translation through initiator tRNA(fMet) aminoacylation. This Methanocorpusculum labreanum (strain ATCC 43576 / DSM 4855 / Z) protein is Methionine--tRNA ligase.